A 212-amino-acid polypeptide reads, in one-letter code: MQLFHLCLIISCSCPTVQASKLCLGWLWGMDIDPYKEFGASVELLSFLPSDFFPSIRDLLDTASALYREALESPEHCSPHHTALRQAILCWGELMNLATWVGSNLEDPASRELVVSYVNVNMGLKIRQLLWFHVSCLTFGRETVLEYLVSFGVWIRTPPAYRPPNAPILSTLPETTVVRRRGRSPRRRTPSPRRRRSQSPRRRRSQSRESQC.

The N-terminal stretch at 1-19 is a signal peptide; it reads MQLFHLCLIISCSCPTVQA. Positions 25–27 are HBEAG; sequence GWL. A disordered region spans residues 165–212; sequence NAPILSTLPETTVVRRRGRSPRRRTPSPRRRRSQSPRRRRSQSRESQC. Residues 178-205 are compositionally biased toward basic residues; the sequence is VRRRGRSPRRRTPSPRRRRSQSPRRRRS. One copy of the 1; half-length repeat lies at 184 to 190; that stretch reads SPRRRTP. Residues 184–206 are 3 X 8 AA repeats of S-P-R-R-R-R-S-Q; the sequence is SPRRRTPSPRRRRSQSPRRRRSQ. The propeptide occupies 184–212; it reads SPRRRTPSPRRRRSQSPRRRRSQSRESQC. A run of 2 repeats spans residues 191–198 and 199–206.

The protein belongs to the orthohepadnavirus precore antigen family. As to quaternary structure, homodimerizes. In terms of processing, phosphorylated. Cleaved by host furin.

The protein localises to the secreted. Its subcellular location is the host nucleus. May regulate immune response to the intracellular capsid in acting as a T-cell tolerogen, by having an immunoregulatory effect which prevents destruction of infected cells by cytotoxic T-cells. This immune regulation may predispose to chronicity during perinatal infections and prevent severe liver injury during adult infections. This Homo sapiens (Human) protein is External core antigen.